Here is a 79-residue protein sequence, read N- to C-terminus: Putative sulfur carrier protein TM_0983 (79 aa).

The active-site Cysteine persulfide intermediate is the Cys17.

Belongs to the sulfur carrier protein TusA family.

This chain is Putative sulfur carrier protein TM_0983, found in Thermotoga maritima (strain ATCC 43589 / DSM 3109 / JCM 10099 / NBRC 100826 / MSB8).